The chain runs to 171 residues: Ribosome maturation factor RimP (171 aa).

The protein belongs to the RimP family.

The protein localises to the cytoplasm. Required for maturation of 30S ribosomal subunits. The polypeptide is Ribosome maturation factor RimP (Anaeromyxobacter sp. (strain K)).